The primary structure comprises 233 residues: Type IV secretion system protein PtlE homolog (233 aa).

Residues 42-62 (VAWAALAVTALSLIAIATMLP) traverse the membrane as a helical segment.

The protein belongs to the virB8 family.

Its subcellular location is the cell inner membrane. This chain is Type IV secretion system protein PtlE homolog (ptlE), found in Bordetella bronchiseptica (strain ATCC BAA-588 / NCTC 13252 / RB50) (Alcaligenes bronchisepticus).